We begin with the raw amino-acid sequence, 229 residues long: tRNA (guanine-N(7)-)-methyltransferase (229 aa).

Residues glutamate 59, glutamate 84, aspartate 111, and aspartate 134 each contribute to the S-adenosyl-L-methionine site. Residue aspartate 134 is part of the active site. Lysine 138 contacts substrate. Residues 140–145 (KHNKRR) form an interaction with RNA region. Substrate-binding positions include aspartate 170 and 207–210 (TKFE).

Belongs to the class I-like SAM-binding methyltransferase superfamily. TrmB family.

The enzyme catalyses guanosine(46) in tRNA + S-adenosyl-L-methionine = N(7)-methylguanosine(46) in tRNA + S-adenosyl-L-homocysteine. The protein operates within tRNA modification; N(7)-methylguanine-tRNA biosynthesis. Its function is as follows. Catalyzes the formation of N(7)-methylguanine at position 46 (m7G46) in tRNA. The polypeptide is tRNA (guanine-N(7)-)-methyltransferase (Saccharophagus degradans (strain 2-40 / ATCC 43961 / DSM 17024)).